The sequence spans 544 residues: NXPE family member 4 (544 aa).

An N-terminal signal peptide occupies residues 1 to 27 (MKISMINYKSLLALLFILASWIIFTVF). N-linked (GlcNAc...) asparagine glycosylation is found at Asn-29, Asn-38, Asn-47, Asn-48, Asn-92, Asn-160, and Asn-210.

Belongs to the NXPE family.

The protein resides in the secreted. In Homo sapiens (Human), this protein is NXPE family member 4 (NXPE4).